Here is a 180-residue protein sequence, read N- to C-terminus: Inner membrane-spanning protein YciB (180 aa).

5 consecutive transmembrane segments (helical) span residues 22 to 42 (IYVA…LTWL), 50 to 70 (MTLI…VFHN), 76 to 96 (WKVT…QVVL), 121 to 141 (AAWA…AFWL), and 149 to 169 (FKVF…GIYI).

The protein belongs to the YciB family.

It localises to the cell inner membrane. Plays a role in cell envelope biogenesis, maintenance of cell envelope integrity and membrane homeostasis. This chain is Inner membrane-spanning protein YciB, found in Edwardsiella ictaluri (strain 93-146).